A 351-amino-acid polypeptide reads, in one-letter code: Actin maturation protease (351 aa).

Positions 1–19 are enriched in pro residues; it reads MTSPCSPPLKPPISPPKTP. Residues 1–70 are disordered; it reads MTSPCSPPLK…PPAATGPAPR (70 aa). Residues 36–50 are compositionally biased toward low complexity; that stretch reads LDFSALPSPPWSQQT. Pro residues predominate over residues 51–64; the sequence is PVPPPLPLPPPPAA. A peptidase C39-like region spans residues 124 to 244; the sequence is SLIQEGPQCG…WAVSAGVLLG (121 aa). Residue C132 is part of the active site. Residue S316 is modified to Phosphoserine.

Belongs to the ACTMAP family. Interacts (via N-terminus) with PFN2 isoforms IIa and IIb; the interactions may facilitate efficient cleavage of the acetylated N-terminus of immature actin. Interacts with PFN1.

It is found in the cytoplasm. The catalysed reaction is N-terminal N(alpha)-acetyl-L-methionyl-L-aspartyl-[protein] + H2O = N-terminal L-aspartyl-[protein] + N-acetyl-L-methionine. It catalyses the reaction N-terminal N(alpha)-acetyl-L-methionyl-L-glutamyl-[protein] + H2O = N-terminal L-glutamyl-[protein] + N-acetyl-L-methionine. The enzyme catalyses N-terminal N(alpha)-acetyl-L-cysteinyl-L-aspartyl-[protein] + H2O = N-terminal L-aspartyl-[protein] + N-acetyl-L-cysteine. It carries out the reaction N-terminal N(alpha)-acetyl-L-cysteinyl-L-glutamyl-[protein] + H2O = N-terminal L-glutamyl-[protein] + N-acetyl-L-cysteine. Actin maturation protease that specifically mediates the cleavage of immature acetylated N-terminal actin, thereby contributing to actin maturation. Cleaves N-terminal acetylated methionine of immature cytoplasmic beta- and gamma-actins ACTB and ACTG1 after translation. Cleaves N-terminal acetylated cysteine of muscle alpha-actins ACTA1, ACTC1 and ACTA2 after canonical removal of N-terminal methionine. This is Actin maturation protease from Homo sapiens (Human).